We begin with the raw amino-acid sequence, 386 residues long: Centrosomal protein of 44 kDa (386 aa).

The interval 11-194 (RKLEQVLRSL…GVPEGTVTST (184 aa)) is binds with microtubules and centrioles. Positions 232–262 (ELTALQIALAECQEKLKKLTWIEKRLECLEA) form a coiled coil. Ser329 is subject to Phosphoserine. A coiled-coil region spans residues 359 to 382 (SEETTMQKMERMKKMFEETAELLK).

In terms of assembly, interacts with CROCC. Interacts with POC1B; the interaction is direct and recruits POC1B to centriolar microtubules. Binds to centriolar microtubules.

It is found in the cytoplasm. Its subcellular location is the cytoskeleton. It localises to the microtubule organizing center. The protein resides in the centrosome. The protein localises to the centriole. It is found in the spindle pole. Its subcellular location is the midbody. Its function is as follows. Centriole-enriched microtubule-binding protein involved in centriole biogenesis. In collaboration with CEP295 and POC1B, is required for the centriole-to-centrosome conversion by ensuring the formation of bona fide centriole wall. Functions as a linker component that maintains centrosome cohesion. Associates with CROCC and regulates its stability and localization to the centrosome. The sequence is that of Centrosomal protein of 44 kDa (Cep44) from Rattus norvegicus (Rat).